Reading from the N-terminus, the 124-residue chain is Conotoxin Cl14.12 (124 aa).

The N-terminal stretch at Met-1–Ala-17 is a signal peptide. A propeptide spanning residues Leu-18–Thr-74 is cleaved from the precursor.

Contains 2 disulfide bond. In terms of tissue distribution, expressed by the venom duct.

Its subcellular location is the secreted. This is Conotoxin Cl14.12 from Californiconus californicus (California cone).